The sequence spans 129 residues: Small ribosomal subunit protein uS11c (129 aa).

The protein belongs to the universal ribosomal protein uS11 family. In terms of assembly, part of the 30S ribosomal subunit.

The protein localises to the plastid. Its subcellular location is the chloroplast. The sequence is that of Small ribosomal subunit protein uS11c from Pleurastrum terricola (Filamentous green alga).